The primary structure comprises 58 residues: Sperm histone P2b (58 aa).

The disordered stretch occupies residues 20–41; sequence LRRRRYRSSRRRRRRPCRRRRH.

The protein belongs to the protamine P2 family. Testis.

The protein resides in the nucleus. Its subcellular location is the chromosome. Functionally, protamines substitute for histones in the chromatin of sperm during the haploid phase of spermatogenesis. They compact sperm DNA into a highly condensed, stable and inactive complex. The protein is Sperm histone P2b of Equus caballus (Horse).